A 418-amino-acid polypeptide reads, in one-letter code: Glutamyl-tRNA reductase (418 aa).

Substrate-binding positions include 49 to 52 (TCNR), Ser109, 114 to 116 (EPQ), and Gln120. The Nucleophile role is filled by Cys50. Position 189–194 (189–194 (GAGETI)) interacts with NADP(+).

The protein belongs to the glutamyl-tRNA reductase family. Homodimer.

The enzyme catalyses (S)-4-amino-5-oxopentanoate + tRNA(Glu) + NADP(+) = L-glutamyl-tRNA(Glu) + NADPH + H(+). The protein operates within porphyrin-containing compound metabolism; protoporphyrin-IX biosynthesis; 5-aminolevulinate from L-glutamyl-tRNA(Glu): step 1/2. Its function is as follows. Catalyzes the NADPH-dependent reduction of glutamyl-tRNA(Glu) to glutamate 1-semialdehyde (GSA). The polypeptide is Glutamyl-tRNA reductase (Enterobacter sp. (strain 638)).